Here is a 556-residue protein sequence, read N- to C-terminus: DNA ligase B (556 aa).

The active-site N6-AMP-lysine intermediate is Lys126.

Belongs to the NAD-dependent DNA ligase family. LigB subfamily.

It catalyses the reaction NAD(+) + (deoxyribonucleotide)n-3'-hydroxyl + 5'-phospho-(deoxyribonucleotide)m = (deoxyribonucleotide)n+m + AMP + beta-nicotinamide D-nucleotide.. In terms of biological role, catalyzes the formation of phosphodiester linkages between 5'-phosphoryl and 3'-hydroxyl groups in double-stranded DNA using NAD as a coenzyme and as the energy source for the reaction. In Stutzerimonas stutzeri (strain A1501) (Pseudomonas stutzeri), this protein is DNA ligase B.